Consider the following 607-residue polypeptide: Albumin (607 aa).

Positions 1–18 are cleaved as a signal peptide; it reads MKWVTFVSLLFLFSSAYF. A propeptide spanning residues 19–24 is cleaved from the precursor; sequence RGVLRR. 3 consecutive Albumin domains span residues 19 to 209, 210 to 402, and 403 to 600; these read RGVL…DALK, ERIL…QFTP, and LVEE…KLVA. H27 is a Cu cation binding site. S29 is modified (phosphoserine). The Ca(2+) site is built by E30 and D37. C77 and C86 are oxidised to a cystine. S82 and S89 each carry phosphoserine. Zn(2+) is bound at residue H91. Cystine bridges form between C99-C115, C114-C125, C147-C192, C191-C200, C223-C269, and C268-C276. T107 bears the Phosphothreonine mark. K228 bears the N6-succinyllysine mark. E267 is a Ca(2+) binding site. Zn(2+)-binding residues include H270 and D272. The Ca(2+) site is built by D272, E275, D278, and D282. Disulfide bonds link C288-C302, C301-C312, C339-C384, C383-C392, C415-C461, C460-C471, C484-C500, and C499-C510. Position 442 is a phosphoserine (S442). Residues T443 and T445 each carry the phosphothreonine modification. S512 bears the Phosphoserine mark. 2 disulfide bridges follow: C537/C582 and C581/C590. An N6-methyllysine modification is found at K557. Phosphothreonine is present on T569. K587 is modified (N6-succinyllysine).

Belongs to the ALB/AFP/VDB family. Interacts with FCGRT; this interaction regulates ALB homeostasis. Interacts with TASOR. In plasma, occurs in a covalently-linked complex with chromophore-bound alpha-1-microglobulin; this interaction does not prevent fatty acid binding to ALB. In terms of processing, phosphorylated by FAM20C in the extracellular medium. Plasma.

It localises to the secreted. Its function is as follows. Binds water, Ca(2+), Na(+), K(+), fatty acids, hormones, bilirubin and drugs. Its main function is the regulation of the colloidal osmotic pressure of blood. Major zinc transporter in plasma, typically binds about 80% of all plasma zinc. Major calcium and magnesium transporter in plasma, binds approximately 45% of circulating calcium and magnesium in plasma. Potentially has more than two calcium-binding sites and might additionally bind calcium in a non-specific manner. The shared binding site between zinc and calcium at residue Asp-272 suggests a crosstalk between zinc and calcium transport in the blood. The rank order of affinity is zinc &gt; calcium &gt; magnesium. Binds to the bacterial siderophore enterobactin and inhibits enterobactin-mediated iron uptake of E.coli from ferric transferrin, and may thereby limit the utilization of iron and growth of enteric bacteria such as E.coli. Does not prevent iron uptake by the bacterial siderophore aerobactin. This is Albumin (ALB) from Equus asinus (Donkey).